Here is a 329-residue protein sequence, read N- to C-terminus: Urease accessory protein UreD 2 (329 aa).

A disordered region spans residues 100–120 (YSRPSDSSKFTNGTQSANSNT). The segment covering 103-120 (PSDSSKFTNGTQSANSNT) has biased composition (polar residues).

Belongs to the UreD family. As to quaternary structure, ureD, UreF and UreG form a complex that acts as a GTP-hydrolysis-dependent molecular chaperone, activating the urease apoprotein by helping to assemble the nickel containing metallocenter of UreC. The UreE protein probably delivers the nickel.

The protein resides in the cytoplasm. In terms of biological role, required for maturation of urease via the functional incorporation of the urease nickel metallocenter. In Psychrobacter cryohalolentis (strain ATCC BAA-1226 / DSM 17306 / VKM B-2378 / K5), this protein is Urease accessory protein UreD 2.